A 412-amino-acid chain; its full sequence is Maltoporin (412 aa).

Residues 1-22 (MKKVSVIAAAVAATLAAGSAFA) form the signal peptide.

Belongs to the porin LamB (TC 1.B.3) family. Homotrimer formed of three 18-stranded antiparallel beta-barrels, containing three independent channels.

It is found in the cell outer membrane. The catalysed reaction is beta-maltose(in) = beta-maltose(out). Functionally, involved in the transport of maltose and maltodextrins. The polypeptide is Maltoporin (Vibrio cholerae serotype O1 (strain ATCC 39315 / El Tor Inaba N16961)).